Consider the following 37-residue polypeptide: Large ribosomal subunit protein bL36A (37 aa).

This sequence belongs to the bacterial ribosomal protein bL36 family.

The sequence is that of Large ribosomal subunit protein bL36A from Neisseria meningitidis serogroup C (strain 053442).